Here is a 489-residue protein sequence, read N- to C-terminus: MEEGKMDENEWSYHGEGNKSLVVAHAQRCVVLRFLKFPPNKKKTSEEILQHLQNIVDFGKNVMKDFLGENYVHCGEVVQLPLEFVKQLCLKIQCERPESRCDKDLDTFSGYAMCLPNLTRLQTFHFAEHRPILCVEIKPKCGFIPFSNDVTHEMKHKVCRYCMHQHLKVATGKWKKISKYCPLDLYSGNKQRMHFALRSLLQETQNNLRIFKNGELIYGCGDARSPVADLKELAHHLKPFFFPSNGLASGPHCTKAVIRELVHVITRVLLSSSEKARAGALRLGLQGPRVCEASPFSRSLHNQGKNTSEHSGLPKGCLLYKTLQVQMLDQLDIEGLYPLYKRVEQYLEEFPEERKTLQIDGPYDEVFYQKLLDLSTEDDGTVAFALTKVQQYRVAMTAKDCSIMIALSPCLQGTSSDQRPVIPSSRSRLAFSVSVLDLDLKPYESIPHQYKLDSKIVNYYSKTVHAKDDTVRSTRFKEHEDCTLVLHKV.

The EXKPK motif motif lies at 136–140; the sequence is EIKPK.

This sequence belongs to the IPK1 type 2 family. As to expression, in brain, it is expressed throughout the hippocampus (CA1, CA2, CA3 and dentate gyrus), inner layers of the cerebral cortex, and Purkinje cells of the cerebellum. In heart, it is expressed in cardiomyocytes but not in interstitial cells, blood vessels, or valves. Also expressed in testis.

It is found in the cytoplasm. The protein resides in the nucleus. The catalysed reaction is 1D-myo-inositol 1,3,4,5,6-pentakisphosphate + ATP = 1D-myo-inositol hexakisphosphate + ADP + H(+). Functionally, phosphorylates Ins(1,3,4,5,6)P5 at position 2 to form Ins(1,2,3,4,5,6)P6 (InsP6 or phytate). InsP6 is involved in many processes such as mRNA export, non-homologous end-joining, endocytosis, ion channel regulation. It also protects cells from TNF-alpha-induced apoptosis. This Mus musculus (Mouse) protein is Inositol-pentakisphosphate 2-kinase (Ippk).